Reading from the N-terminus, the 24-residue chain is MNGRPSVFTSQDYLSDHLWRALNA.

It belongs to the arginine attenuator peptide family.

Arginine attenuator peptide (AAP) that has a regulatory role in the production of arginine-specific carbamoyl phosphate synthetase. Encoded by an upstream open reading frame (uORF) within the 5'-leader region of arginine-specific carbamoyl phosphate synthetase small chain (arg-2) mRNA, it attenuates the translation of the downstream arg-2 ORF. In the presence of high concentrations of arginine, ribosomes translating the uORF encoding AAP stall at the termination codon, resulting in reduced translation from the downstream arg-2 initiation codon. The protein is Arginine attenuator peptide of Neurospora crassa (strain ATCC 24698 / 74-OR23-1A / CBS 708.71 / DSM 1257 / FGSC 987).